The following is a 208-amino-acid chain: Putative proteasome subunit alpha type-4-B (208 aa).

This sequence belongs to the peptidase T1A family. Component of the 20S core complex of the 26S proteasome. The 26S proteasome is composed of a core protease (CP), known as the 20S proteasome, capped at one or both ends by the 19S regulatory particle (RP/PA700). The 20S proteasome core is composed of 28 subunits that are arranged in four stacked rings, resulting in a barrel-shaped structure. The two end rings are each formed by seven alpha subunits, and the two central rings are each formed by seven beta subunits. The catalytic chamber with the active sites is on the inside of the barrel.

The protein localises to the cytoplasm. It localises to the nucleus. Its function is as follows. The proteasome is a multicatalytic proteinase complex which is characterized by its ability to cleave peptides with Arg, Phe, Tyr, Leu, and Glu adjacent to the leaving group at neutral or slightly basic pH. The proteasome has an ATP-dependent proteolytic activity. The chain is Putative proteasome subunit alpha type-4-B (PAC2) from Arabidopsis thaliana (Mouse-ear cress).